We begin with the raw amino-acid sequence, 177 residues long: Nicotinamide-nucleotide adenylyltransferase (177 aa).

The protein belongs to the archaeal NMN adenylyltransferase family.

It localises to the cytoplasm. The enzyme catalyses beta-nicotinamide D-ribonucleotide + ATP + H(+) = diphosphate + NAD(+). It functions in the pathway cofactor biosynthesis; NAD(+) biosynthesis; NAD(+) from nicotinamide D-ribonucleotide: step 1/1. This chain is Nicotinamide-nucleotide adenylyltransferase, found in Halobacterium salinarum (strain ATCC 29341 / DSM 671 / R1).